The primary structure comprises 121 residues: NADPH-dependent 7-cyano-7-deazaguanine reductase (121 aa).

Cysteine 36 acts as the Thioimide intermediate in catalysis. Aspartate 43 serves as the catalytic Proton donor. Substrate contacts are provided by residues 58–60 (VEL) and 77–78 (YE).

It belongs to the GTP cyclohydrolase I family. QueF type 1 subfamily.

The protein localises to the cytoplasm. It catalyses the reaction 7-aminomethyl-7-carbaguanine + 2 NADP(+) = 7-cyano-7-deazaguanine + 2 NADPH + 3 H(+). It participates in tRNA modification; tRNA-queuosine biosynthesis. Its function is as follows. Catalyzes the NADPH-dependent reduction of 7-cyano-7-deazaguanine (preQ0) to 7-aminomethyl-7-deazaguanine (preQ1). This is NADPH-dependent 7-cyano-7-deazaguanine reductase from Rhodopirellula baltica (strain DSM 10527 / NCIMB 13988 / SH1).